The following is a 355-amino-acid chain: Ataxin-3 (355 aa).

Residue M1 forms a Peptide (Met-Gly) (interchain with G-Cter in ubiquitin) linkage. In terms of domain architecture, Josephin spans 1–180 (MESIFHEKQE…DCEADQLLQM (180 aa)). The active-site Nucleophile is C14. Catalysis depends on H119, which acts as the Proton acceptor. N134 is a catalytic residue. K200 participates in a covalent cross-link: Glycyl lysine isopeptide (Lys-Gly) (interchain with G-Cter in ubiquitin). Position 219 is a phosphoserine (S219). UIM domains lie at 224 to 243 (EDED…IDME) and 244 to 263 (DEEA…SSRS). A compositionally biased stretch (polar residues) spans 257–275 (MQGSSRSMCENSPQTSSPD). Residues 257 to 355 (MQGSSRSMCE…KDNLKAERKK (99 aa)) are disordered. 3 positions are modified to phosphoserine: S268, S272, and S273. The span at 279–289 (EELRRRREAYF) shows a compositional bias: basic and acidic residues. S321 carries the phosphoserine modification. Residues 329-348 (SEEDMLRAAVTMSLETAKDN) enclose the UIM 3 domain. The segment covering 344–355 (TAKDNLKAERKK) has biased composition (basic and acidic residues).

Interacts with STUB1/CHIP (when monoubiquitinated). Interacts with DNA repair proteins RAD23A and RAD23B. Interacts with BECN1 (via its poly-Gln domain). Interacts with PRKN, UBR2, VCP and tubulin. Post-translationally, monoubiquitinated by UBE2W, possibly leading to activate the deubiquitinating enzyme activity.

It is found in the nucleus matrix. The protein resides in the nucleus. The protein localises to the lysosome membrane. The catalysed reaction is Thiol-dependent hydrolysis of ester, thioester, amide, peptide and isopeptide bonds formed by the C-terminal Gly of ubiquitin (a 76-residue protein attached to proteins as an intracellular targeting signal).. Deubiquitinating enzyme involved in protein homeostasis maintenance, transcription, cytoskeleton regulation, myogenesis and degradation of misfolded chaperone substrates. Binds long polyubiquitin chains and trims them, while it has weak or no activity against chains of 4 or less ubiquitins. Involved in degradation of misfolded chaperone substrates via its interaction with STUB1/CHIP: recruited to monoubiquitinated STUB1/CHIP, and restricts the length of ubiquitin chain attached to STUB1/CHIP substrates and preventing further chain extension. Interacts with key regulators of transcription and represses transcription: acts as a histone-binding protein that regulates transcription. Acts as a negative regulator of mTORC1 signaling in response to amino acid deprivation by mediating deubiquitination of RHEB, thereby promoting RHEB inactivation by the TSC-TBC complex. Regulates autophagy via the deubiquitination of 'Lys-402' of BECN1 leading to the stabilization of BECN1. This is Ataxin-3 (Atxn3) from Mus musculus (Mouse).